Reading from the N-terminus, the 252-residue chain is Pimeloyl-[acyl-carrier protein] methyl ester esterase (252 aa).

The AB hydrolase-1 domain maps to 15 to 239 (LVMLHGWAMH…FPHCGHAPFL (225 aa)). Residues Trp21, 81–82 (SL), and 143–147 (FLTLQ) each bind substrate. Residue Ser81 is the Nucleophile of the active site. Catalysis depends on residues Asp207 and His235. His235 is a substrate binding site.

It belongs to the AB hydrolase superfamily. Carboxylesterase BioH family. In terms of assembly, monomer.

It localises to the cytoplasm. The enzyme catalyses 6-carboxyhexanoyl-[ACP] methyl ester + H2O = 6-carboxyhexanoyl-[ACP] + methanol + H(+). It functions in the pathway cofactor biosynthesis; biotin biosynthesis. The physiological role of BioH is to remove the methyl group introduced by BioC when the pimeloyl moiety is complete. It allows to synthesize pimeloyl-ACP via the fatty acid synthetic pathway through the hydrolysis of the ester bonds of pimeloyl-ACP esters. In Nitrosomonas europaea (strain ATCC 19718 / CIP 103999 / KCTC 2705 / NBRC 14298), this protein is Pimeloyl-[acyl-carrier protein] methyl ester esterase.